We begin with the raw amino-acid sequence, 526 residues long: Cytochrome P450 monooxygeanse terK (526 aa).

The chain crosses the membrane as a helical span at residues 21–43 (NWGQLTGALLFLAACTWIYLPAF). Residue Cys-465 coordinates heme.

The protein belongs to the cytochrome P450 family. The cofactor is heme.

The protein localises to the membrane. It functions in the pathway secondary metabolite biosynthesis. Cytochrome P450 monooxygeanse; part of the gene cluster that mediates the biosynthesis of terpendoles, indole-diterpene (IDT) mycotoxins including terpendole I, terpendole K, terpendole C, as well as the kinesin Eg5 inhibitor terpendole E. Terpendoles biosynthesis begins with the synthesis of geranylgeranyl diphosphate (GGPP) by a yet unidentified GGPP synthase. Condensation of indole-3-glycerol phosphate with GGPP by the prenyltransferase terC then forms 3-geranylgeranylindole (3-GGI), followed by epoxidation and cyclization of this intermediate (by the FAD-dependent monooxygeanse terM and the terpene cyclase terB) to form paspaline. The cytochrome monooxygenase terQ then hydroxylates paspalline at C-11 to yield terpendole E. The cytochrome monooxygenase terP converts terpendole E to 13-desoxyterpendole I, and terQ converts 13-desoxyterpendole I into terpendole I. TerF and terK are required for conversion of terpendole I to terpendole C which is further converted to terpendole K. The chain is Cytochrome P450 monooxygeanse terK from Tolypocladium album (Soil fungus).